Reading from the N-terminus, the 264-residue chain is Tritrans,polycis-undecaprenyl-diphosphate synthase (geranylgeranyl-diphosphate specific) (264 aa).

Residue D43 is part of the active site. Residue D43 coordinates Mg(2+). Substrate-binding positions include 44 to 47, W48, H60, and 88 to 90; these read GNRR and STE. N91 (proton acceptor) is an active-site residue. Residues F92, R94, R213, and 219 to 221 each bind substrate; that span reads RIS. E232 provides a ligand contact to Mg(2+).

This sequence belongs to the UPP synthase family. In terms of assembly, homodimer. Mg(2+) serves as cofactor.

It carries out the reaction geranylgeranyl diphosphate + 7 isopentenyl diphosphate = tri-trans,hepta-cis-undecaprenyl diphosphate + 7 diphosphate. Functionally, catalyzes the sequential condensation of isopentenyl diphosphate (IPP) with geranylgeranyl diphosphate (GGPP) to yield (2Z,6Z,10Z,14Z,18Z,22Z,26Z,30E,34E,38E)-undecaprenyl diphosphate (tritrans,heptacis-UPP). It is probably the precursor of glycosyl carrier lipids. This chain is Tritrans,polycis-undecaprenyl-diphosphate synthase (geranylgeranyl-diphosphate specific), found in Pyrococcus abyssi (strain GE5 / Orsay).